Consider the following 604-residue polypeptide: Serine protease 56 (604 aa).

An N-terminal signal peptide occupies residues 1–22 (MPLAMLLLLLLLLSPDSQTAHG). The interval 70–94 (CQGPGRPRPQAPLLQDPPEPVQCGE) is disordered. A compositionally biased stretch (pro residues) spans 75–89 (RPRPQAPLLQDPPEP). Residue asparagine 101 is glycosylated (N-linked (GlcNAc...) asparagine). Residues 109-341 (IVGGSTAPSG…FKDWLQEQMS (233 aa)) form the Peptidase S1 domain. Cysteines 134 and 150 form a disulfide. Catalysis depends on charge relay system residues histidine 149 and aspartate 195. Disulfide bonds link cysteine 229–cysteine 296, cysteine 260–cysteine 275, and cysteine 286–cysteine 317. Residue serine 290 is the Charge relay system of the active site. Disordered stretches follow at residues 424–452 (RPGL…PREQ) and 578–604 (PQAP…PPVP).

The protein belongs to the peptidase S1 family. In terms of tissue distribution, expressed in the eye: present in the retina and in the optic nerve.

The protein localises to the endoplasmic reticulum membrane. In terms of biological role, serine protease required during eye development. The chain is Serine protease 56 (Prss56) from Mus musculus (Mouse).